Here is a 207-residue protein sequence, read N- to C-terminus: Cytidylate kinase (207 aa).

7-15 (GVAASGKSS) lines the ATP pocket.

It belongs to the cytidylate kinase family. Type 1 subfamily.

It is found in the cytoplasm. The catalysed reaction is CMP + ATP = CDP + ADP. It catalyses the reaction dCMP + ATP = dCDP + ADP. This chain is Cytidylate kinase, found in Deinococcus deserti (strain DSM 17065 / CIP 109153 / LMG 22923 / VCD115).